Reading from the N-terminus, the 554-residue chain is Urocanate hydratase (554 aa).

NAD(+) is bound by residues 51–52 (GG), glutamine 129, 175–177 (GMG), glutamate 195, 241–242 (NA), 262–266 (QTSAH), 272–273 (YL), and tyrosine 321. Cysteine 409 is a catalytic residue. Glycine 491 provides a ligand contact to NAD(+).

The protein belongs to the urocanase family. NAD(+) is required as a cofactor.

Its subcellular location is the cytoplasm. The enzyme catalyses 4-imidazolone-5-propanoate = trans-urocanate + H2O. The protein operates within amino-acid degradation; L-histidine degradation into L-glutamate; N-formimidoyl-L-glutamate from L-histidine: step 2/3. In terms of biological role, catalyzes the conversion of urocanate to 4-imidazolone-5-propionate. This is Urocanate hydratase from Methylobacterium nodulans (strain LMG 21967 / CNCM I-2342 / ORS 2060).